The following is a 406-amino-acid chain: 11-beta-hydroxysteroid dehydrogenase type 2 (406 aa).

Residue 82 to 111 (TRAVLITGCDSGFGKETAKKLDAMGFTVLA) participates in NAD(+) binding. Residue serine 219 coordinates substrate. Residue tyrosine 232 is the Proton acceptor of the active site. Positions 379–406 (GQPGATPAPDTAQDNPNPNPDPSLVGAR) are disordered.

Belongs to the short-chain dehydrogenases/reductases (SDR) family. As to quaternary structure, interacts with ligand-free cytoplasmic NR3C2. As to expression, highly expressed in the kidney.

Its subcellular location is the microsome. It is found in the endoplasmic reticulum. The enzyme catalyses an 11beta-hydroxysteroid + NAD(+) = an 11-oxosteroid + NADH + H(+). The catalysed reaction is corticosterone + NAD(+) = 11-dehydrocorticosterone + NADH + H(+). It carries out the reaction cortisol + NAD(+) = cortisone + NADH + H(+). It catalyses the reaction 11beta,17beta-dihydroxyandrost-4-ene-3-one + NAD(+) = 17beta-hydroxyandrost-4-ene-3,11-dione + NADH + H(+). The enzyme catalyses 11beta-hydroxyandrost-4-ene-3,17-dione + NAD(+) = androst-4-ene-3,11,17-trione + NADH + H(+). The protein operates within steroid metabolism. With respect to regulation, inhibited by carbenoloxone. In terms of biological role, catalyzes the conversion of biologically active 11beta-hydroxyglucocorticoids (11beta-hydroxysteroid) such as corticosterone, to inactive 11-ketoglucocorticoids (11-oxosteroid) such as 11-dehydrocorticosterone, in the presence of NAD(+). Functions as a dehydrogenase (oxidase), thereby decreasing the concentration of active glucocorticoids, thus protecting the nonselective mineralocorticoid receptor from occupation by glucocorticoids. Plays an important role in maintaining glucocorticoids balance during preimplantation and protects the fetus from excessive maternal corticosterone exposure. Catalyzes the oxidation of 11beta-hydroxytestosterone (11beta,17beta-dihydroxyandrost-4-ene-3-one) to 11-ketotestosterone (17beta-hydroxyandrost-4-ene-3,11-dione), a major bioactive androgen. Catalyzes the conversion of 11beta-hydroxyandrostenedione (11beta-hydroxyandrost-4-ene-3,17-dione) to 11-ketoandrostenedione (androst-4-ene-3,11,17-trione), which can be further metabolized to 11-ketotestosterone. Converts 7-beta-25-dihydroxycholesterol to 7-oxo-25-hydroxycholesterol in vitro. 7-beta-25-dihydroxycholesterol (not 7-oxo-25-hydroxycholesterol) acts as a ligand for the G-protein-coupled receptor (GPCR) Epstein-Barr virus-induced gene 2 (EBI2) and may thereby regulate immune cell migration. May protect ovulating oocytes and fertilizing spermatozoa from the adverse effects of cortisol. In Oryctolagus cuniculus (Rabbit), this protein is 11-beta-hydroxysteroid dehydrogenase type 2 (HSD11B2).